A 258-amino-acid chain; its full sequence is Global transcriptional regulator CodY (258 aa).

Residues 1–156 are GAF domain; that stretch reads MSTLLDKTRK…SATIVGLEIL (156 aa). Residues 204-223 constitute a DNA-binding region (H-T-H motif); that stretch reads ASKIADKVGITRSVIVNALR.

Belongs to the CodY family.

It is found in the cytoplasm. In terms of biological role, DNA-binding global transcriptional regulator which is involved in the adaptive response to starvation and acts by directly or indirectly controlling the expression of numerous genes in response to nutrient availability. During rapid exponential growth, CodY is highly active and represses genes whose products allow adaptation to nutrient depletion. In Clostridium kluyveri (strain NBRC 12016), this protein is Global transcriptional regulator CodY.